Reading from the N-terminus, the 77-residue chain is Blood-induced peptide 1 (77 aa).

Positions glutamate 38–asparagine 71 form a coiled coil.

In terms of biological role, plays an important role in survival in host blood through increasing tolerance to stresses such as heat, salt, or cycloheximide, which is essential for virulence. In Candida albicans (strain SC5314 / ATCC MYA-2876) (Yeast), this protein is Blood-induced peptide 1.